Here is a 292-residue protein sequence, read N- to C-terminus: Elongation factor Ts (292 aa).

Residues 80–83 are involved in Mg(2+) ion dislocation from EF-Tu; that stretch reads TDFV.

Belongs to the EF-Ts family.

The protein localises to the cytoplasm. Functionally, associates with the EF-Tu.GDP complex and induces the exchange of GDP to GTP. It remains bound to the aminoacyl-tRNA.EF-Tu.GTP complex up to the GTP hydrolysis stage on the ribosome. The sequence is that of Elongation factor Ts from Psychrobacter sp. (strain PRwf-1).